Here is a 98-residue protein sequence, read N- to C-terminus: NADH-ubiquinone oxidoreductase chain 4L (98 aa).

The next 3 membrane-spanning stretches (helical) occupy residues 2-22 (PSIFINIILAFATALLGTLVF), 29-49 (SLLCLEGMMLSMFILSTLIIL), and 61-81 (ILLLVFAACEAAVGLALLVMV).

It belongs to the complex I subunit 4L family. Core subunit of respiratory chain NADH dehydrogenase (Complex I) which is composed of 45 different subunits.

It localises to the mitochondrion inner membrane. The catalysed reaction is a ubiquinone + NADH + 5 H(+)(in) = a ubiquinol + NAD(+) + 4 H(+)(out). In terms of biological role, core subunit of the mitochondrial membrane respiratory chain NADH dehydrogenase (Complex I) which catalyzes electron transfer from NADH through the respiratory chain, using ubiquinone as an electron acceptor. Part of the enzyme membrane arm which is embedded in the lipid bilayer and involved in proton translocation. This Propithecus tattersalli (Golden-crowned Sifaka) protein is NADH-ubiquinone oxidoreductase chain 4L (MT-ND4L).